The primary structure comprises 309 residues: Elongation factor Ts (309 aa).

An involved in Mg(2+) ion dislocation from EF-Tu region spans residues 82–85 (TDFV).

It belongs to the EF-Ts family.

The protein localises to the cytoplasm. In terms of biological role, associates with the EF-Tu.GDP complex and induces the exchange of GDP to GTP. It remains bound to the aminoacyl-tRNA.EF-Tu.GTP complex up to the GTP hydrolysis stage on the ribosome. This Rickettsia bellii (strain OSU 85-389) protein is Elongation factor Ts.